Consider the following 528-residue polypeptide: MVSRSAFLLFCVLFLATEETLASLFSSRLIHRFSDEGRASIKTPSSSDSLPNKQSLEYYRLLAESDFRRQRMNLGAKVQSLVPSEGSKTISSGNDFGWLHYTWIDIGTPSVSFLVALDTGSNLLWIPCNCVQCAPLTSTYYSSLATKDLNEYNPSSSSTSKVFLCSHKLCDSASDCESPKEQCPYTVNYLSGNTSSSGLLVEDILHLTYNTNNRLMNGSSSVKARVVIGCGKKQSGDYLDGVAPDGLMGLGPAEISVPSFLSKAGLMRNSFSLCFDEEDSGRIYFGDMGPSIQQSTPFLQLDNNKYSGYIVGVEACCIGNSCLKQTSFTTFIDSGQSFTYLPEEIYRKVALEIDRHINATSKNFEGVSWEYCYESSAEPKVPAIKLKFSHNNTFVIHKPLFVFQQSQGLVQFCLPISPSGQEGIGSIGQNYMRGYRMVFDRENMKLGWSPSKCQEDKIEPPQASPGSTSSPNPLPTDEQQSRGGHAVSPAIAGKTPSKTPSSSSSYSFSSIMRLFNSLLLLHWLASLM.

The signal sequence occupies residues 1–22 (MVSRSAFLLFCVLFLATEETLA). The 350-residue stretch at 100-449 (HYTWIDIGTP…DRENMKLGWS (350 aa)) folds into the Peptidase A1 domain. The active site involves Asp118. 2 N-linked (GlcNAc...) asparagine glycosylation sites follow: Asn193 and Asn217. The active site involves Asp333. 2 N-linked (GlcNAc...) asparagine glycosylation sites follow: Asn358 and Asn391. Residues 451–503 (SKCQEDKIEPPQASPGSTSSPNPLPTDEQQSRGGHAVSPAIAGKTPSKTPSSS) are disordered. A compositionally biased stretch (polar residues) spans 464–482 (SPGSTSSPNPLPTDEQQSR). Over residues 494-503 (KTPSKTPSSS) the composition is skewed to low complexity. Ser503 carries the GPI-anchor amidated serine lipid modification. Residues 504–528 (SSYSFSSIMRLFNSLLLLHWLASLM) constitute a propeptide, removed in mature form.

The protein belongs to the peptidase A1 family.

Its subcellular location is the cell membrane. The protein is Aspartic proteinase-like protein 1 of Arabidopsis thaliana (Mouse-ear cress).